A 2221-amino-acid chain; its full sequence is Voltage-dependent L-type calcium channel subunit alpha-1C (2221 aa).

The tract at residues 1–20 (MVNENTRMYIPEENHQGSNY) is disordered. Over 1-124 (MVNENTRMYI…RACISIVEWK (124 aa)) the chain is Cytoplasmic. Positions 47-68 (GAALSWQAAIDAARQAKLMGSA) are calmodulin-binding. The disordered stretch occupies residues 73–98 (ISTVSSTQRKRQQYGKPKKQGSTTAT). Over residues 80–91 (QRKRQQYGKPKK) the composition is skewed to basic residues. The I repeat unit spans residues 111 to 408 (NPIRRACISI…LVLGVLSGEF (298 aa)). Residues 125–143 (PFEIIILLTIFANCVALAI) form a helical membrane-spanning segment. The Extracellular portion of the chain corresponds to 144–158 (YIPFPEDDSNATNSN). The N-linked (GlcNAc...) asparagine glycan is linked to Asn-153. The helical transmembrane segment at 159-179 (LERVEYLFLIIFTVEAFLKVI) threads the bilayer. Residues 180–188 (AYGLLFHPN) lie on the Cytoplasmic side of the membrane. A helical transmembrane segment spans residues 189-209 (AYLRNGWNLLDFIIVVVGLFS). Topologically, residues 210 to 232 (AILEQATKADGANALGGKGAGFD) are extracellular. Residues 233–251 (VKALRAFRVLRPLRLVSGV) form a helical membrane-spanning segment. The Cytoplasmic segment spans residues 252-268 (PSLQVVLNSIIKAMVPL). The helical transmembrane segment at 269–290 (LHIALLVLFVIIIYAIIGLELF) threads the bilayer. Over 291–350 (MGKMHKTCYNQEGIADVPAEDDPSPCALETGHGRQCQNGTVCKPGWDGPKHGITNFDNFA) the chain is Extracellular. Intrachain disulfides connect Cys-298–Cys-326 and Cys-316–Cys-332. An N-linked (GlcNAc...) asparagine glycan is attached at Asn-328. Residues 351 to 372 (FAMLTVFQCITMEGWTDVLYWV) constitute an intramembrane region (pore-forming). The Selectivity filter of repeat I signature appears at 361–364 (TMEG). Glu-363 is a binding site for Ca(2+). The Extracellular portion of the chain corresponds to 373-380 (NDAVGRDW). Residues 381 to 401 (PWIYFVTLIIIGSFFVLNLVL) traverse the membrane as a helical segment. At 402–524 (GVLSGEFSKE…RKCRAAVKSN (123 aa)) the chain is on the cytoplasmic side. The segment at 428 to 445 (QQLEEDLKGYLDWITQAE) is AID/alpha-interaction domain; mediates interaction with the beta subunit. The segment at 449–481 (PENEDEGMDEEKPRNMSMPTSETESVNTENVAG) is disordered. The span at 465-478 (SMPTSETESVNTEN) shows a compositional bias: polar residues. Position 469 is a phosphoserine (Ser-469). Thr-476 bears the Phosphothreonine mark. An II repeat occupies 510–756 (NRFCRRKCRA…VFLAIAVDNL (247 aa)). The chain crosses the membrane as a helical span at residues 525–543 (VFYWLVIFLVFLNTLTIAS). Residues 544–554 (EHYNQPNWLTE) lie on the Extracellular side of the membrane. The chain crosses the membrane as a helical span at residues 555–575 (VQDTANKALLALFTAEMLLKM). Residues 576–586 (YSLGLQAYFVS) are Cytoplasmic-facing. Residues 587 to 606 (LFNRFDCFVVCGGILETILV) form a helical membrane-spanning segment. At 607-615 (ETKIMSPLG) the chain is on the extracellular side. Residues 616-634 (ISVLRCVRLLRIFKITRYW) traverse the membrane as a helical segment. At 635–653 (NSLSNLVASLLNSVRSIAS) the chain is on the cytoplasmic side. The helical transmembrane segment at 654-673 (LLLLLFLFIIIFSLLGMQLF) threads the bilayer. Over 674 to 693 (GGKFNFDEMQTRRSTFDNFP) the chain is Extracellular. Positions 694–715 (QSLLTVFQILTGEDWNSVMYDG) form an intramembrane region, pore-forming. The Selectivity filter of repeat II motif lies at 704–707 (TGED). Glu-706 is a Ca(2+) binding site. Over 716 to 725 (IMAYGGPSFP) the chain is Extracellular. A helical transmembrane segment spans residues 726-745 (GMLVCIYFIILFICGNYILL). At 746 to 900 (NVFLAIAVDN…LQCHRIVNDT (155 aa)) the chain is on the cytoplasmic side. A disordered region spans residues 764–861 (SAQKEEEEEK…EMPVGPRPRP (98 aa)). The span at 783 to 792 (SPEKKQELVE) shows a compositional bias: basic and acidic residues. Phosphoserine occurs at positions 808 and 815. The interval 829–876 (NENEDKSPYPNPETTGEEDEEEPEMPVGPRPRPLSELHLKEKAVPMPE) is interaction with STAC2. Positions 843 to 852 (TGEEDEEEPE) are enriched in acidic residues. One copy of the III repeat lies at 887-1189 (NRFRLQCHRI…IFVGFVIVTF (303 aa)). Residues 901 to 919 (IFTNLILFFILLSSISLAA) form a helical membrane-spanning segment. Topologically, residues 920 to 931 (EDPVQHTSFRNH) are extracellular. A helical transmembrane segment spans residues 932 to 952 (ILFYFDIVFTTIFTIEIALKI). Residues 953 to 987 (LGNADYVFTSIFTLEIILKMTAYGAFLHKGSFCRN) lie on the Cytoplasmic side of the membrane. The helical transmembrane segment at 988–1006 (YFNILDLLVVSVSLISFGI) threads the bilayer. Over 1007–1013 (QSSAINV) the chain is Extracellular. Residues 1014 to 1032 (VKILRVLRVLRPLRAINRA) traverse the membrane as a helical segment. Residues 1033 to 1051 (KGLKHVVQCVFVAIRTIGN) lie on the Cytoplasmic side of the membrane. The chain crosses the membrane as a helical span at residues 1052 to 1071 (IVIVTTLLQFMFACIGVQLF). The Extracellular segment spans residues 1072–1121 (KGKLYTCSDSSKQTEAECKGNYITYKDGEVDHPIIQPRSWENSKFDFDNV). Cys-1078 and Cys-1089 form a disulfide bridge. Residues 1109-1198 (RSWENSKFDF…FQEQGEQEYK (90 aa)) form a dihydropyridine binding region. The segment at residues 1122-1142 (LAAMMALFTVSTFEGWPELLY) is an intramembrane region (pore-forming). A Selectivity filter of repeat III motif is present at residues 1133 to 1136 (TFEG). A Ca(2+)-binding site is contributed by Glu-1135. The Extracellular segment spans residues 1143–1159 (RSIDSHTEDKGPIYNYR). A helical transmembrane segment spans residues 1160–1181 (VEISIFFIIYIIIIAFFMMNIF). Over 1182–1239 (VGFVIVTFQEQGEQEYKNCELDKNQRQCVEYALKARPLRRYIPKNQHQYKVWYVVNST) the chain is Cytoplasmic. An IV repeat occupies 1226-1527 (NQHQYKVWYV…LFVAVIMDNF (302 aa)). The helical transmembrane segment at 1240–1261 (YFEYLMFVLILLNTICLAMQHY) threads the bilayer. Residues 1262-1269 (GQSCLFKI) are Extracellular-facing. Residues 1270–1291 (AMNILNMLFTGLFTVEMILKLI) form a helical membrane-spanning segment. Topologically, residues 1292 to 1301 (AFKPKGYFSD) are cytoplasmic. Residues 1302–1321 (PWNVFDFLIVIGSIIDVILS) traverse the membrane as a helical segment. Residues 1322 to 1372 (ETNHYFCDAWNTFDALIVVGSIVDIAITEVNPAEHTQCSPSMNAEENSRIS) lie on the Extracellular side of the membrane. A helical transmembrane segment spans residues 1373-1391 (ITFFRLFRVMRLVKLLSRG). At 1392 to 1409 (EGIRTLLWTFIKSFQALP) the chain is on the cytoplasmic side. The helical transmembrane segment at 1410–1430 (YVALLIVMLFFIYAVIGMQVF) threads the bilayer. Topologically, residues 1431-1452 (GKIALNDTTEINRNNNFQTFPQ) are extracellular. Residue Asn-1436 is glycosylated (N-linked (GlcNAc...) asparagine). An intramembrane region (pore-forming) is located at residues 1453-1471 (AVLLLFRCATGEAWQDIML). The short motif at 1462–1465 (TGEA) is the Selectivity filter of repeat IV element. Topologically, residues 1472 to 1499 (ACMPGKKCAPESEPSNSTEGETPCGSSF) are extracellular. The segment at 1478–1546 (KCAPESEPSN…LGPHHLDEFK (69 aa)) is dihydropyridine binding. Cysteines 1479 and 1495 form a disulfide. N-linked (GlcNAc...) asparagine glycosylation is present at Asn-1487. The interval 1492–1534 (ETPCGSSFAVFYFISFYMLCAFLIINLFVAVIMDNFDYLTRDW) is phenylalkylamine binding. A helical membrane pass occupies residues 1500-1524 (AVFYFISFYMLCAFLIINLFVAVIM). The Cytoplasmic portion of the chain corresponds to 1525–2221 (DNFDYLTRDW…QDSRVYVSSL (697 aa)). Residues 1659–1686 (DEVTVGKFYATFLIQEYFRKFKKRKEQG) are important for interaction with STAC1, STAC2 and STAC3. Residues 1665-1685 (KFYATFLIQEYFRKFKKRKEQ) form a calmodulin-binding IQ region region. Positions 1699 to 1718 (LQAGLRTLHDIGPEIRRAIS) are important for localization in at the junctional membrane. A phosphoserine mark is found at Ser-1718 and Ser-1739. The tract at residues 1778–1847 (INKAGSSQGD…TVEGHGPPLS (70 aa)) is disordered. Polar residues predominate over residues 1799 to 1811 (STFTPSSYSSTGS). Over residues 1812–1822 (NANINNANNTA) the composition is skewed to low complexity. Ser-1981 is modified (phosphoserine; by PKA). Disordered stretches follow at residues 2029–2063 (ASFP…VESS) and 2186–2221 (AGQD…VSSL).

This sequence belongs to the calcium channel alpha-1 subunit (TC 1.A.1.11) family. CACNA1C subfamily. In terms of assembly, component of a calcium channel complex consisting of a pore-forming alpha subunit (CACNA1C) and ancillary beta, gamma and delta subunits. The channel complex contains alpha, beta, gamma and delta subunits in a 1:1:1:1 ratio, i.e. it contains only one of each type of subunit. CACNA1C channel activity is modulated by ancillary subunits, such as CACNB1, CACNB2, CACNB3, CACNA2D1 and CACNA2D4. Interacts with the gamma subunits CACNG4, CACNG6, CACNG7 and CACNG8. Interacts with CACNB1. Interacts with CACNB2. Identified in a complex with CACNA2D4 and CACNB3. Interacts with CACNB3. Interacts with CACNA2D1. Interacts with CACNA2D4. Interacts with CALM1. Interacts (via the N-terminus and the C-terminal C and IQ motifs) with CABP1; this inhibits Ca(2+)-dependent channel inactivation. The binding via the C motif is calcium independent whereas the binding via IQ requires the presence of calcium and is mutually exclusive with calmodulin binding. The binding to the cytoplasmic N-terminal domain is calcium independent but is essential for the channel modulation. Interacts (via C-terminal CDB motif) with CABP5; in a calcium-dependent manner. Interacts with CIB1; the interaction increases upon cardiomyocytes hypertrophy. Interacts with STAC2 and STAC3; this inhibits channel inactivation. As to quaternary structure, (Microbial infection) Interacts with influenzavirus H1 hemagglutinin. Phosphorylation by PKA at Ser-1981 activates the channel. Elevated levels of blood glucose lead to increased phosphorylation by PKA. In terms of tissue distribution, detected throughout the brain, including hippocampus, cerebellum and amygdala, throughout the heart and vascular system, including ductus arteriosus, in urinary bladder, and in retina and sclera in the eye. Expressed in brain, heart, jejunum, ovary, pancreatic beta-cells and vascular smooth muscle. Overall expression is reduced in atherosclerotic vascular smooth muscle.

It localises to the cell membrane. It is found in the sarcolemma. The protein localises to the perikaryon. Its subcellular location is the postsynaptic density membrane. The protein resides in the cell projection. It localises to the dendrite. It is found in the T-tubule. It catalyses the reaction Ca(2+)(in) = Ca(2+)(out). With respect to regulation, inhibited by dihydropyridines (DHP), such as isradipine. Inhibited by nifedipine. Channel activity is regulated by Ca(2+) and calmodulin. Binding of STAC1, STAC2 or STAC3 to a region that overlaps with the calmodulin binding site inhibits channel inactivation by Ca(2+) and calmodulin. Binding of calmodulin or CABP1 at the same regulatory sites results in opposite effects on the channel function. Shear stress and pressure increases calcium channel activity. Its function is as follows. Pore-forming, alpha-1C subunit of the voltage-gated calcium channel that gives rise to L-type calcium currents. Mediates influx of calcium ions into the cytoplasm, and thereby triggers calcium release from the sarcoplasm. Plays an important role in excitation-contraction coupling in the heart. Required for normal heart development and normal regulation of heart rhythm. Required for normal contraction of smooth muscle cells in blood vessels and in the intestine. Essential for normal blood pressure regulation via its role in the contraction of arterial smooth muscle cells. Long-lasting (L-type) calcium channels belong to the 'high-voltage activated' (HVA) group. Pore-forming, alpha-1C subunit of the voltage-gated calcium channel that gives rise to L-type calcium currents. In terms of biological role, (Microbial infection) Acts as a receptor for Influenzavirus. May play a critical role in allowing virus entry when sialylated and expressed on lung tissues. This chain is Voltage-dependent L-type calcium channel subunit alpha-1C (CACNA1C), found in Homo sapiens (Human).